The chain runs to 635 residues: Kelch-like protein 31 (635 aa).

The BTB domain maps to 74 to 138 (CDLTVATKSK…AYSGKLTLSL (65 aa)). A BACK domain is found at 173–274 (CMYVVNIADT…TPQDLVSHVQ (102 aa)). Kelch repeat units follow at residues 318-366 (VLLT…VLDG), 367-420 (FLYV…TFNG), 421-467 (LLFA…VIDG), 469-514 (ILVS…TVGD), 516-566 (AYVL…TLNN), and 567-615 (KIYL…VVTI).

As to expression, strongly expressed in fast skeletal muscle, and weakly in heart. Not expressed in other tissues.

This chain is Kelch-like protein 31 (klhl31), found in Danio rerio (Zebrafish).